Consider the following 507-residue polypeptide: ATP-dependent RNA helicase DDX47 (507 aa).

Over residues 1 to 31 the composition is skewed to acidic residues; that stretch reads MSETSEDEQTQLQTSDEEEDLGSEEEQEDED. The interval 1-58 is disordered; the sequence is MSETSEDEQTQLQTSDEEEDLGSEEEQEDEDNNHKEGDSEAALSGEDDKGSEDDAAEE. The Q motif signature appears at 61–89; the sequence is LTWKDLGLNEALCQACDELKWKAPSKIQR. The region spanning 92–263 is the Helicase ATP-binding domain; sequence IPVALQGKDV…RASLKDPVKV (172 aa). 105 to 112 serves as a coordination point for ATP; it reads AETGSGKT. The DEAD box motif lies at 211 to 214; the sequence is DEAD. The region spanning 290–434 is the Helicase C-terminal domain; the sequence is YLVHILNELA…LYKCEEDEVM (145 aa). The stretch at 426-453 forms a coiled coil; the sequence is YKCEEDEVMALQERVAEAQRTAKLELKD. A compositionally biased stretch (basic and acidic residues) spans 451-471; that stretch reads LKDLEDTRGGHKRGGDTHDDS. Residues 451-507 are disordered; that stretch reads LKDLEDTRGGHKRGGDTHDDSENFTGARKRMKPMGGTGGGGRKSFGKKNWSKGKQKR. The span at 494–507 shows a compositional bias: basic residues; sequence SFGKKNWSKGKQKR.

Belongs to the DEAD box helicase family. DDX47/RRP3 subfamily.

The protein localises to the nucleus. It localises to the nucleolus. It catalyses the reaction ATP + H2O = ADP + phosphate + H(+). Its function is as follows. Part of a translational control module, also containing ath/DHX33 and ais/DDX52, which coordinates germline stem cell differentiation with ribosome biogenesis during oogenesis. This module allows for coregulation of ribosomal proteins and non1/GTPBP4, a p53 repressor, preventing p53 stabilization, cell cycle arrest and loss of stem cell differentiation. With atos, adjusts transcription and translation of a subset of OXPHOS genes in macrophages to increase mitochondrial bioenergetics and allow tissue invasion. The sequence is that of ATP-dependent RNA helicase DDX47 from Drosophila melanogaster (Fruit fly).